Here is a 427-residue protein sequence, read N- to C-terminus: V-type proton ATPase subunit C 2 (427 aa).

The segment at 298-320 is disordered; sequence PLGNPARPAAGQTDRDRESEGEG.

The protein belongs to the V-ATPase C subunit family. As to quaternary structure, V-ATPase is a heteromultimeric enzyme made up of two complexes: the ATP-hydrolytic V1 complex and the proton translocation V0 complex. The V1 complex consists of three catalytic AB heterodimers that form a heterohexamer, three peripheral stalks each consisting of EG heterodimers, one central rotor including subunits D and F, and the regulatory subunits C and H. The proton translocation complex V0 consists of the proton transport subunit a, a ring of proteolipid subunits c9c'', rotary subunit d, subunits e and f, and the accessory subunits ATP6AP1/Ac45 and ATP6AP2/PRR. In terms of tissue distribution, predominantly expressed in the lung and kidney. Isoform 1 is lung-specific while isoform 3 is a kidney-specific isoform. Isoform 1 is localized in the lamellar bodies of type II alveolar cells. Isoform 2 is strongly expressed in the cortical and medulla collecting ducts and is found in the plasma membranes of renal alpha and beta intercalated cells.

Its function is as follows. Subunit of the V1 complex of vacuolar(H+)-ATPase (V-ATPase), a multisubunit enzyme composed of a peripheral complex (V1) that hydrolyzes ATP and a membrane integral complex (V0) that translocates protons. V-ATPase is responsible for acidifying and maintaining the pH of intracellular compartments and in some cell types, is targeted to the plasma membrane, where it is responsible for acidifying the extracellular environment. Subunit C is necessary for the assembly of the catalytic sector of the enzyme and is likely to have a specific function in its catalytic activity. The protein is V-type proton ATPase subunit C 2 (Atp6v1c2) of Mus musculus (Mouse).